The chain runs to 312 residues: Methionyl-tRNA formyltransferase (312 aa).

Ser109–Pro112 is a binding site for (6S)-5,6,7,8-tetrahydrofolate.

This sequence belongs to the Fmt family.

It catalyses the reaction L-methionyl-tRNA(fMet) + (6R)-10-formyltetrahydrofolate = N-formyl-L-methionyl-tRNA(fMet) + (6S)-5,6,7,8-tetrahydrofolate + H(+). In terms of biological role, attaches a formyl group to the free amino group of methionyl-tRNA(fMet). The formyl group appears to play a dual role in the initiator identity of N-formylmethionyl-tRNA by promoting its recognition by IF2 and preventing the misappropriation of this tRNA by the elongation apparatus. The chain is Methionyl-tRNA formyltransferase from Anaeromyxobacter sp. (strain K).